We begin with the raw amino-acid sequence, 330 residues long: Chromatin modification-related protein eaf3 (330 aa).

One can recognise a Tudor-knot domain in the interval 13–66 (ERVLCFHHEILYEAKILDVRHTNAEDKKSPFEYLVHYKGWKNTWDDWVPQDRLR). Positions 86-125 (AFRQKSTKTTLKRKAGSDRGSARDSEERQTSVPGRVTKRA) are disordered. Basic and acidic residues predominate over residues 100–114 (AGSDRGSARDSEERQ). The MRG domain occupies 138 to 315 (TRPSVRIVMP…ATNEYVEKSR (178 aa)).

The protein belongs to the MRG family. In terms of assembly, component of the NuA4 histone acetyltransferase complex.

The protein localises to the nucleus. Functionally, involved in deacetylation of histones, chromatin assembly and chromosome segregation. May act as a transcriptional oscillator, directing histone deacetylases to specific chromosomal domains. Component of the NuA4 histone acetyltransferase complex which is involved in transcriptional activation of selected genes principally by acetylation of nucleosomal histone H4 and H2A. The NuA4 complex is also involved in DNA repair. The polypeptide is Chromatin modification-related protein eaf3 (eaf3) (Aspergillus fumigatus (strain ATCC MYA-4609 / CBS 101355 / FGSC A1100 / Af293) (Neosartorya fumigata)).